Here is a 95-residue protein sequence, read N- to C-terminus: Large ribosomal subunit protein bL27 (95 aa).

The propeptide occupies M1–F6. Positions M1–R25 are disordered.

This sequence belongs to the bacterial ribosomal protein bL27 family. The N-terminus is cleaved by ribosomal processing cysteine protease Prp.

The sequence is that of Large ribosomal subunit protein bL27 from Thermoanaerobacter pseudethanolicus (strain ATCC 33223 / 39E) (Clostridium thermohydrosulfuricum).